The following is a 712-amino-acid chain: Testis-specific gene 10 protein (712 aa).

At Ser161 the chain carries Phosphoserine. Positions 571–703 (QMTNERISMQ…SPDRDLDRSL (133 aa)) are interaction with HIF1A. The interval 673-699 (YHLGSMKPNTKCHSPERAHHRSPDRDL) is disordered. A compositionally biased stretch (basic and acidic residues) spans 685 to 699 (HSPERAHHRSPDRDL). Ser702 carries the post-translational modification Phosphoserine.

Belongs to the CEP135/TSGA10 family. In terms of assembly, interacts with HIF1A. In terms of processing, processed into N-terminal 27-kDa and C-terminal 55-kDa fragments. In terms of tissue distribution, expressed in testis, predominantly in elongated spermatids (at protein level). Detected in spermatocytes only at the mRNA, but not at the protein level.

The protein resides in the cytoplasm. It localises to the cytoskeleton. The protein localises to the microtubule organizing center. Its subcellular location is the centrosome. It is found in the centriole. Plays a role in spermatogenesis. When overexpressed, prevents nuclear localization of HIF1A. In Rattus norvegicus (Rat), this protein is Testis-specific gene 10 protein (Tsga10).